The primary structure comprises 670 residues: Leucine-rich repeat-containing protein 45 (670 aa).

6 LRR repeats span residues 58-80 (TLCT…LLLR), 87-107 (VLRF…EALG), 115-136 (SIQS…FATF), 145-166 (ALQR…ELAL), 173-194 (TLQQ…ALMN), and 201-212 (TLWRLDLAGNNI). Positions 252–645 (REEKSKQFLD…IARIRDEEAQ (394 aa)) form a coiled coil. Phosphoserine; by NEK2 is present on S661.

As to quaternary structure, homomer. Interacts with CROCC/rootletin and CEP250. Interacts with CEP44. Interacts with CCDC102B (via N-terminus). Post-translationally, phosphorylated by NEK2 during misosis, phosphorylation reduces centrosomal localization which subsequently leads to centrosome separation.

Its subcellular location is the cytoplasm. The protein resides in the cytoskeleton. The protein localises to the microtubule organizing center. It is found in the centrosome. Its function is as follows. Component of the proteinaceous fiber-like linker between two centrioles, required for centrosome cohesion. The polypeptide is Leucine-rich repeat-containing protein 45 (LRRC45) (Homo sapiens (Human)).